Here is a 124-residue protein sequence, read N- to C-terminus: MNNLLLVALGGSIGAVFRYLISIFMIQVFGSSFPFGTLLVNVLGSFLMGVIYALGQMSHISPELKALIGVGLLGALTTFSTFSNETLLLMQEGDWLKAALNVVLNLSLCLFMVYLGQQLVFSRI.

A run of 4 helical transmembrane segments spans residues 4–24 (LLLV…ISIF), 35–55 (FGTL…YALG), 60–80 (ISPE…TTFS), and 102–122 (VVLN…LVFS). Glycine 74 and threonine 77 together coordinate Na(+).

This sequence belongs to the fluoride channel Fluc/FEX (TC 1.A.43) family.

The protein localises to the cell inner membrane. It carries out the reaction fluoride(in) = fluoride(out). Na(+) is not transported, but it plays an essential structural role and its presence is essential for fluoride channel function. Fluoride-specific ion channel. Important for reducing fluoride concentration in the cell, thus reducing its toxicity. This chain is Fluoride-specific ion channel FluC, found in Shewanella sp. (strain ANA-3).